Reading from the N-terminus, the 505-residue chain is Probable bifunctional methylthioribulose-1-phosphate dehydratase/enolase-phosphatase E1 (505 aa).

The tract at residues 1–237 is methylthioribulose-1-phosphate dehydratase; that stretch reads MGLDKDGISN…ALKLHQLGLD (237 aa). A substrate-binding site is contributed by Cys-109. Residues His-127 and His-129 each coordinate Zn(2+). Glu-152 acts as the Proton donor/acceptor; for methylthioribulose-1-phosphate dehydratase activity in catalysis. His-202 contacts Zn(2+). Positions 266-505 are enolase-phosphatase E1; sequence FVLDIEGTTT…FRTAKSLLEL (240 aa). The Mg(2+) site is built by Asp-269 and Glu-271. Substrate-binding positions include 404 to 405 and Lys-438; that span reads SS. Asp-464 lines the Mg(2+) pocket.

The protein in the N-terminal section; belongs to the aldolase class II family. MtnB subfamily. It in the C-terminal section; belongs to the HAD-like hydrolase superfamily. MasA/MtnC family. The cofactor is Zn(2+). Mg(2+) is required as a cofactor.

It catalyses the reaction 5-(methylsulfanyl)-D-ribulose 1-phosphate = 5-methylsulfanyl-2,3-dioxopentyl phosphate + H2O. It carries out the reaction 5-methylsulfanyl-2,3-dioxopentyl phosphate + H2O = 1,2-dihydroxy-5-(methylsulfanyl)pent-1-en-3-one + phosphate. The protein operates within amino-acid biosynthesis; L-methionine biosynthesis via salvage pathway; L-methionine from S-methyl-5-thio-alpha-D-ribose 1-phosphate: step 2/6. It participates in amino-acid biosynthesis; L-methionine biosynthesis via salvage pathway; L-methionine from S-methyl-5-thio-alpha-D-ribose 1-phosphate: step 3/6. It functions in the pathway amino-acid biosynthesis; L-methionine biosynthesis via salvage pathway; L-methionine from S-methyl-5-thio-alpha-D-ribose 1-phosphate: step 4/6. The chain is Probable bifunctional methylthioribulose-1-phosphate dehydratase/enolase-phosphatase E1 from Physcomitrium patens (Spreading-leaved earth moss).